Consider the following 311-residue polypeptide: Tryptophan 2,3-dioxygenase (311 aa).

The disordered stretch occupies residues 1 to 37; that stretch reads MQPPGGDAPAGCPFSGARAAQPAQAAHEAPHVPGEAD. Residues 17 to 27 are compositionally biased toward low complexity; that stretch reads ARAAQPAQAAH. Residues 80–84, tyrosine 142, and arginine 146 contribute to the substrate site; that span reads FIIQH. Histidine 269 contributes to the heme binding site. Threonine 283 serves as a coordination point for substrate.

Belongs to the tryptophan 2,3-dioxygenase family. In terms of assembly, homotetramer. Heme is required as a cofactor.

It carries out the reaction L-tryptophan + O2 = N-formyl-L-kynurenine. The protein operates within amino-acid degradation; L-tryptophan degradation via kynurenine pathway; L-kynurenine from L-tryptophan: step 1/2. Heme-dependent dioxygenase that catalyzes the oxidative cleavage of the L-tryptophan (L-Trp) pyrrole ring and converts L-tryptophan to N-formyl-L-kynurenine. Catalyzes the oxidative cleavage of the indole moiety. In Burkholderia cenocepacia (strain ATCC BAA-245 / DSM 16553 / LMG 16656 / NCTC 13227 / J2315 / CF5610) (Burkholderia cepacia (strain J2315)), this protein is Tryptophan 2,3-dioxygenase.